The sequence spans 567 residues: MGQSSSISSSNEEGSSHSKKFTNSKDILAYFNNKAQQQVTIPELVSFKGNLQIEDLNTPISHKALCNSLYFPQNHAMIVGIVTNMLRVLSNFPLMKSSYEPITGYGLLKCILLLNRARCAKFLKTKSYDQLKLLFISLSLQKTDKEELSEESENDGDKELTIKQIITGFDDVDTEMLCIPADFMLQFLTWLLILTVDCPTTNSKLDNTETHDQWGNFKVSALNLLRTMNPDVVGDIESHSITFQQFSTAIRTVMPNLLKPLENLMEHFFYLQHDLVDHDTNLSSIQDSKVMTPALLAQLSTGLPKELFIHKLQSLYIGRKSGFSMRSLQAKVFKWMAPSILVVSGMRITNSEEYAAEKNPRYRHFLEEFPKLKESDQMMDASHLNKRKTTFAVYIDDPWKVTNKDYFGDLNTRIIEISPRQDIYKVNQKGTIYFNTIGGGIGIGDKQPLIKPASKRYIPGNVSLTFDSTLEFAVFRNTGYGGSLDPGLLSMERKEENSPYELHFLIQDVEVWGCGGEKELEEQIKQLEWEEAESKRRQQINLRSLGEDRALLEMAGLVGQHQGGGSM.

The 227-residue stretch at 289–515 (KVMTPALLAQ…IQDVEVWGCG (227 aa)) folds into the TLDc domain.

This sequence belongs to the RTC5 family.

The protein resides in the cytoplasm. Its function is as follows. May be involved in a process influencing telomere capping. This is Restriction of telomere capping protein 5 (RTC5) from Saccharomyces cerevisiae (strain YJM789) (Baker's yeast).